The primary structure comprises 400 residues: Argininosuccinate synthase (400 aa).

Residues 11–19 (AYSGGLDTS) and Ala-38 each bind ATP. Positions 89 and 94 each coordinate L-citrulline. Gly-119 contacts ATP. Residues Thr-121, Asn-125, and Asp-126 each coordinate L-aspartate. Residue Asn-125 coordinates L-citrulline. Positions 129, 179, 188, 264, and 276 each coordinate L-citrulline.

It belongs to the argininosuccinate synthase family. Type 1 subfamily. In terms of assembly, homotetramer.

It is found in the cytoplasm. The enzyme catalyses L-citrulline + L-aspartate + ATP = 2-(N(omega)-L-arginino)succinate + AMP + diphosphate + H(+). Its pathway is amino-acid biosynthesis; L-arginine biosynthesis; L-arginine from L-ornithine and carbamoyl phosphate: step 2/3. The sequence is that of Argininosuccinate synthase from Oleidesulfovibrio alaskensis (strain ATCC BAA-1058 / DSM 17464 / G20) (Desulfovibrio alaskensis).